A 264-amino-acid chain; its full sequence is Indole-3-glycerol phosphate synthase (264 aa).

This sequence belongs to the TrpC family.

The catalysed reaction is 1-(2-carboxyphenylamino)-1-deoxy-D-ribulose 5-phosphate + H(+) = (1S,2R)-1-C-(indol-3-yl)glycerol 3-phosphate + CO2 + H2O. It participates in amino-acid biosynthesis; L-tryptophan biosynthesis; L-tryptophan from chorismate: step 4/5. The polypeptide is Indole-3-glycerol phosphate synthase (Xylella fastidiosa (strain 9a5c)).